Reading from the N-terminus, the 501-residue chain is Acetylcholine receptor subunit beta (501 aa).

A signal peptide spans 1 to 23 (MALGALLLLLGVLGTPLAPGARG). Topologically, residues 24–244 (SEAEGQLIKK…VIFYLIIRRK (221 aa)) are extracellular. Cys-151 and Cys-165 are joined by a disulfide. N-linked (GlcNAc...) asparagine glycosylation is present at Asn-164. 3 helical membrane passes run 245-269 (PLFY…VFYL), 277-295 (MGLS…LLLA), and 311-332 (YLMF…VLNL). Residues 333–469 (HHRSPHTHQM…WQFVAMVVDR (137 aa)) are Cytoplasmic-facing. Positions 362–382 (RPKPERDQLPEPHHSLSPRSG) are disordered. Residues 363-375 (PKPERDQLPEPHH) are compositionally biased toward basic and acidic residues. A Phosphotyrosine; by Tyr-kinases modification is found at Tyr-390. The helical transmembrane segment at 470–488 (LFLWTFIVFTSVGTLVIFL) threads the bilayer.

Belongs to the ligand-gated ion channel (TC 1.A.9) family. Acetylcholine receptor (TC 1.A.9.1) subfamily. Beta-1/CHRNB1 sub-subfamily. Pentamer of two alpha chains, and one each of the beta, delta, and gamma (in immature muscle) or epsilon (in mature muscle) chains. The muscle heteropentamer composed of alpha-1, beta-1, delta, epsilon subunits interacts with the alpha-conotoxin ImII.

The protein resides in the postsynaptic cell membrane. Its subcellular location is the cell membrane. The enzyme catalyses K(+)(in) = K(+)(out). It catalyses the reaction Na(+)(in) = Na(+)(out). Functionally, after binding acetylcholine, the AChR responds by an extensive change in conformation that affects all subunits and leads to opening of an ion-conducting channel across the plasma membrane. This Mus musculus (Mouse) protein is Acetylcholine receptor subunit beta (Chrnb1).